We begin with the raw amino-acid sequence, 436 residues long: Cysteine--tRNA ligase (436 aa).

Position 24 (cysteine 24) interacts with Zn(2+). Residues 26–36 (PTVYNHIHIGN) carry the 'HIGH' region motif. Zn(2+) is bound by residues cysteine 202, histidine 227, and glutamate 231. The 'KMSKS' region motif lies at 259–263 (KMSKS). ATP is bound at residue lysine 262.

The protein belongs to the class-I aminoacyl-tRNA synthetase family. In terms of assembly, monomer. Zn(2+) is required as a cofactor.

It localises to the cytoplasm. The catalysed reaction is tRNA(Cys) + L-cysteine + ATP = L-cysteinyl-tRNA(Cys) + AMP + diphosphate. This is Cysteine--tRNA ligase from Ureaplasma parvum serovar 3 (strain ATCC 700970).